The following is a 300-amino-acid chain: Junctional adhesion molecule A (300 aa).

Positions 1 to 26 are cleaved as a signal peptide; the sequence is MGTEGKAGSKLLFLFTSMILGSLVQG. The Extracellular portion of the chain corresponds to 27–238; sequence KGSVYSPQTA…MEAVELNVGG (212 aa). 2 Ig-like V-type domains span residues 28-122 and 134-228; these read GSVY…GEVS and PTVS…EAVR. 2 disulfide bridges follow: cysteine 49/cysteine 108 and cysteine 152/cysteine 212. A glycan (N-linked (GlcNAc...) asparagine) is linked at asparagine 185. The helical transmembrane segment at 239–259 threads the bilayer; that stretch reads IVAAVLVTLILLGLLIFGIWF. The Cytoplasmic portion of the chain corresponds to 260 to 300; it reads AYSRGYFERTKKGTAPGKKVIYSQPSARSEGEFKQTSSFLV. Serine 282, serine 285, and serine 288 each carry phosphoserine.

Belongs to the immunoglobulin superfamily. Interacts with the ninth PDZ domain of MPDZ. Interacts with the first PDZ domain of PARD3. The association between PARD3 and PARD6B probably disrupts this interaction. Interacts with ITGAL (via I-domain). Interacts with CD151. Post-translationally, N-glycosylated.

The protein localises to the cell junction. It localises to the tight junction. The protein resides in the cell membrane. Its function is as follows. Seems to play a role in epithelial tight junction formation. Appears early in primordial forms of cell junctions and recruits PARD3. The association of the PARD6-PARD3 complex may prevent the interaction of PARD3 with JAM1, thereby preventing tight junction assembly. Plays a role in regulating monocyte transmigration involved in integrity of epithelial barrier. Ligand for integrin alpha-L/beta-2 involved in memory T-cell and neutrophil transmigration. The protein is Junctional adhesion molecule A (F11r) of Rattus norvegicus (Rat).